The primary structure comprises 293 residues: HTH-type transcriptional regulator ArgP (293 aa).

In terms of domain architecture, HTH lysR-type spans 4-60; that stretch reads PDYRTLQALDAVIRERGFERAAQKLCITQSAVSQRIKQLENLFGQPLLVRTIPPHPT. Residues 21–40 constitute a DNA-binding region (H-T-H motif); the sequence is FERAAQKLCITQSAVSQRIK.

Belongs to the LysR transcriptional regulatory family. As to quaternary structure, homodimer.

Functionally, controls the transcription of genes involved in arginine and lysine metabolism. This chain is HTH-type transcriptional regulator ArgP, found in Sodalis glossinidius (strain morsitans).